The following is a 274-amino-acid chain: Large ribosomal subunit protein uL2 (274 aa).

Residues 224–259 (AMNPVDHPHGGGEGRTSGGRHPVTPWGIPTKGYKTR) form a disordered region.

The protein belongs to the universal ribosomal protein uL2 family. Part of the 50S ribosomal subunit. Forms a bridge to the 30S subunit in the 70S ribosome.

In terms of biological role, one of the primary rRNA binding proteins. Required for association of the 30S and 50S subunits to form the 70S ribosome, for tRNA binding and peptide bond formation. It has been suggested to have peptidyltransferase activity; this is somewhat controversial. Makes several contacts with the 16S rRNA in the 70S ribosome. This is Large ribosomal subunit protein uL2 from Citrifermentans bemidjiense (strain ATCC BAA-1014 / DSM 16622 / JCM 12645 / Bem) (Geobacter bemidjiensis).